The following is a 223-amino-acid chain: Phosphoenolpyruvate guanylyltransferase (223 aa).

Residues threonine 140, glycine 156, and serine 159 each contribute to the phosphoenolpyruvate site.

The protein belongs to the CofC family.

The catalysed reaction is phosphoenolpyruvate + GTP + H(+) = enolpyruvoyl-2-diphospho-5'-guanosine + diphosphate. It participates in cofactor biosynthesis; coenzyme F420 biosynthesis. Its function is as follows. Guanylyltransferase that catalyzes the activation of phosphoenolpyruvate (PEP) as enolpyruvoyl-2-diphospho-5'-guanosine, via the condensation of PEP with GTP. It is involved in the biosynthesis of coenzyme F420, a hydride carrier cofactor. This is Phosphoenolpyruvate guanylyltransferase from Conexibacter woesei (strain DSM 14684 / CCUG 47730 / CIP 108061 / JCM 11494 / NBRC 100937 / ID131577).